Reading from the N-terminus, the 175-residue chain is FMN reductase (NADH) RutF (175 aa).

This sequence belongs to the non-flavoprotein flavin reductase family. RutF subfamily.

It carries out the reaction FMNH2 + NAD(+) = FMN + NADH + 2 H(+). Functionally, catalyzes the reduction of FMN to FMNH2 which is used to reduce pyrimidine by RutA via the Rut pathway. This is FMN reductase (NADH) RutF from Serratia proteamaculans (strain 568).